We begin with the raw amino-acid sequence, 341 residues long: DNA-directed RNA polymerase subunit alpha (341 aa).

The segment at Met1–Glu233 is alpha N-terminal domain (alpha-NTD). An alpha C-terminal domain (alpha-CTD) region spans residues Thr265–His341.

The protein belongs to the RNA polymerase alpha chain family. In plastids the minimal PEP RNA polymerase catalytic core is composed of four subunits: alpha, beta, beta', and beta''. When a (nuclear-encoded) sigma factor is associated with the core the holoenzyme is formed, which can initiate transcription.

It is found in the plastid. Its subcellular location is the chloroplast. It carries out the reaction RNA(n) + a ribonucleoside 5'-triphosphate = RNA(n+1) + diphosphate. DNA-dependent RNA polymerase catalyzes the transcription of DNA into RNA using the four ribonucleoside triphosphates as substrates. The sequence is that of DNA-directed RNA polymerase subunit alpha from Takakia lepidozioides (Moss).